The sequence spans 294 residues: Acetylglutamate kinase (294 aa).

Substrate-binding positions include 69-70 (GG), Arg91, and Asn190.

This sequence belongs to the acetylglutamate kinase family. ArgB subfamily.

It localises to the cytoplasm. It carries out the reaction N-acetyl-L-glutamate + ATP = N-acetyl-L-glutamyl 5-phosphate + ADP. It participates in amino-acid biosynthesis; L-arginine biosynthesis; N(2)-acetyl-L-ornithine from L-glutamate: step 2/4. Functionally, catalyzes the ATP-dependent phosphorylation of N-acetyl-L-glutamate. The chain is Acetylglutamate kinase from Mycobacterium bovis (strain ATCC BAA-935 / AF2122/97).